Consider the following 399-residue polypeptide: Dual specificity mitogen-activated protein kinase kinase 4 (399 aa).

The disordered stretch occupies residues 1-40 (MAAPSPSGGGGSGGGSGSGTPGPVGSPAPGHPAVSSMQGK). Ala2 carries the N-acetylalanine modification. A compositionally biased stretch (gly residues) spans 7–22 (SGGGGSGGGSGSGTPG). Positions 37–52 (MQGKRKALKLNFANPP) are d domain. An Asymmetric dimethylarginine; alternate modification is found at Arg58. Arg58 is subject to Omega-N-methylarginine; alternate. A Phosphoserine modification is found at Ser90. The Protein kinase domain occupies 102–367 (LKDLGEIGRG…YKELLKHPFI (266 aa)). ATP is bound by residues 108-116 (IGRGAYGSV) and Lys131. The Proton acceptor role is filled by Asp229. Ser257 is modified (phosphoserine; by MAP3K). Thr261 bears the Phosphothreonine; by MAP3K mark. The segment at 364–387 (HPFILMYEERAVEVACYVCKILDQ) is DVD domain.

It belongs to the protein kinase superfamily. STE Ser/Thr protein kinase family. MAP kinase kinase subfamily. In terms of assembly, interacts with SPAG9. Interacts (via its D domain) with its substrates MAPK8/JNK1, MAPK9/JNK2, MAPK10/JNK3, MAPK11 and MAPK14. Interacts (via its DVD domain) with MAP3Ks activators like MAP3K1/MEKK1 and MAP3K11/MLK3. Interacts with ARRB1, ARRB2 and MAPK8IP3/JIP3. Activated by phosphorylation on Ser-257 and Thr-261 by MAP kinase kinase kinases (MAP3Ks). As to expression, abundant expression is seen in the skeletal muscle. It is also widely expressed in other tissues.

Its subcellular location is the cytoplasm. It localises to the nucleus. It catalyses the reaction L-seryl-[protein] + ATP = O-phospho-L-seryl-[protein] + ADP + H(+). It carries out the reaction L-threonyl-[protein] + ATP = O-phospho-L-threonyl-[protein] + ADP + H(+). The catalysed reaction is L-tyrosyl-[protein] + ATP = O-phospho-L-tyrosyl-[protein] + ADP + H(+). Activated in response to a variety of cellular stresses, including UV and gamma-irradiation, heat shock, hyperosmolarity, T-cell receptor stimulation, peroxide and inflammatory cytokines. Also activated by developmental cues. MAP2K4/MKK4 is activated by the majority of MKKKs, such as MAP3K5/ASK1, MAP3K1/MEKK1, MAP3K7/TAK1, MAP3K10/MLK2, MAP3K11/MLK3, MAP3K12/DLK and MAP3K13/LZK. Dual specificity protein kinase which acts as an essential component of the MAP kinase signal transduction pathway. Essential component of the stress-activated protein kinase/c-Jun N-terminal kinase (SAP/JNK) signaling pathway. With MAP2K7/MKK7, is the one of the only known kinase to directly activate the stress-activated protein kinase/c-Jun N-terminal kinases MAPK8/JNK1, MAPK9/JNK2 and MAPK10/JNK3. MAP2K4/MKK4 and MAP2K7/MKK7 both activate the JNKs by phosphorylation, but they differ in their preference for the phosphorylation site in the Thr-Pro-Tyr motif. MAP2K4 shows preference for phosphorylation of the Tyr residue and MAP2K7/MKK7 for the Thr residue. The phosphorylation of the Thr residue by MAP2K7/MKK7 seems to be the prerequisite for JNK activation at least in response to pro-inflammatory cytokines, while other stimuli activate both MAP2K4/MKK4 and MAP2K7/MKK7 which synergistically phosphorylate JNKs. MAP2K4 is required for maintaining peripheral lymphoid homeostasis. The MKK/JNK signaling pathway is also involved in mitochondrial death signaling pathway, including the release cytochrome c, leading to apoptosis. Whereas MAP2K7/MKK7 exclusively activates JNKs, MAP2K4/MKK4 additionally activates the p38 MAPKs MAPK11, MAPK12, MAPK13 and MAPK14. The polypeptide is Dual specificity mitogen-activated protein kinase kinase 4 (MAP2K4) (Homo sapiens (Human)).